The following is a 400-amino-acid chain: tRNA-specific 2-thiouridylase MnmA (400 aa).

Residues Ala19 to Ser26 and Leu45 contribute to the ATP site. Cys113 functions as the Nucleophile in the catalytic mechanism. A disulfide bond links Cys113 and Cys210. Gly137 serves as a coordination point for ATP. An interaction with tRNA region spans residues Arg160–Gln162. The Cysteine persulfide intermediate role is filled by Cys210.

The protein belongs to the MnmA/TRMU family.

It is found in the cytoplasm. It carries out the reaction S-sulfanyl-L-cysteinyl-[protein] + uridine(34) in tRNA + AH2 + ATP = 2-thiouridine(34) in tRNA + L-cysteinyl-[protein] + A + AMP + diphosphate + H(+). Catalyzes the 2-thiolation of uridine at the wobble position (U34) of tRNA, leading to the formation of s(2)U34. This Nitrobacter hamburgensis (strain DSM 10229 / NCIMB 13809 / X14) protein is tRNA-specific 2-thiouridylase MnmA.